The chain runs to 515 residues: 1-pyrroline-5-carboxylate dehydrogenase 1 (515 aa).

Residues Glu-286 and Cys-320 contribute to the active site.

Belongs to the aldehyde dehydrogenase family. RocA subfamily.

The enzyme catalyses L-glutamate 5-semialdehyde + NAD(+) + H2O = L-glutamate + NADH + 2 H(+). It participates in amino-acid degradation; L-proline degradation into L-glutamate; L-glutamate from L-proline: step 2/2. This chain is 1-pyrroline-5-carboxylate dehydrogenase 1 (rocA1), found in Halalkalibacterium halodurans (strain ATCC BAA-125 / DSM 18197 / FERM 7344 / JCM 9153 / C-125) (Bacillus halodurans).